We begin with the raw amino-acid sequence, 127 residues long: Large ribosomal subunit protein bL17 (127 aa).

It belongs to the bacterial ribosomal protein bL17 family. As to quaternary structure, part of the 50S ribosomal subunit. Contacts protein L32.

The chain is Large ribosomal subunit protein bL17 from Stenotrophomonas maltophilia (strain R551-3).